The following is a 273-amino-acid chain: Homeobox protein Hox-C13b (273 aa).

A DNA-binding region (homeobox) is located at residues 201–260 (GRKKRVPYTKIQLKELEKEYAASKFITKDRRRRISATTSLSERQVTIWFQNRRVKEKKFV).

It belongs to the Abd-B homeobox family.

The protein resides in the nucleus. Sequence-specific transcription factor which is part of a developmental regulatory system that provides cells with specific positional identities on the anterior-posterior axis. Plays a role in early embryonic development. The protein is Homeobox protein Hox-C13b (hoxc13b) of Danio rerio (Zebrafish).